Consider the following 450-residue polypeptide: Probable ECA polymerase (450 aa).

11 helical membrane-spanning segments follow: residues 6–26, 37–57, 63–83, 118–138, 155–175, 181–201, 207–227, 228–248, 341–361, 378–398, and 410–430; these read FSGLFVVWLLCTLFIATLTWF, VFFSLLFLLTFFFGFPLTSVL, VGVAPPEILLQVLLSAGCFYA, VILMGIALVSVGIFFMHNGFL, GVALKRFFYFFIPAMLVVYFL, AWLFFLVSTVAFGLLTYMIVG, IIIAFAIFLFIGIIRGWISLW, MLAAAGVLGIVGMFWLALKRY, LVVMGGALFIPLGAIVVGLII, YKAAILHSFCFGAIFNMIVLA, and VFFIVVFGACLMIAKLLYWLF.

It belongs to the WzyE family. As to quaternary structure, probably part of a complex composed of WzxE, WzyE and WzzE.

The protein localises to the cell inner membrane. The protein operates within bacterial outer membrane biogenesis; enterobacterial common antigen biosynthesis. Its function is as follows. Probably involved in the polymerization of enterobacterial common antigen (ECA) trisaccharide repeat units. The sequence is that of Probable ECA polymerase from Shigella flexneri.